The primary structure comprises 487 residues: Bifunctional protein HldE (487 aa).

The tract at residues 1–329 (MLHAVETAFY…GALLTDATYE (329 aa)) is ribokinase. 204–207 (NRGE) provides a ligand contact to ATP. Residue Asp274 is part of the active site. The segment at 356–487 (FTNGCFDLLH…GIVQRISAQK (132 aa)) is cytidylyltransferase.

In the N-terminal section; belongs to the carbohydrate kinase PfkB family. The protein in the C-terminal section; belongs to the cytidylyltransferase family. As to quaternary structure, homodimer.

It catalyses the reaction D-glycero-beta-D-manno-heptose 7-phosphate + ATP = D-glycero-beta-D-manno-heptose 1,7-bisphosphate + ADP + H(+). It carries out the reaction D-glycero-beta-D-manno-heptose 1-phosphate + ATP + H(+) = ADP-D-glycero-beta-D-manno-heptose + diphosphate. Its pathway is nucleotide-sugar biosynthesis; ADP-L-glycero-beta-D-manno-heptose biosynthesis; ADP-L-glycero-beta-D-manno-heptose from D-glycero-beta-D-manno-heptose 7-phosphate: step 1/4. It participates in nucleotide-sugar biosynthesis; ADP-L-glycero-beta-D-manno-heptose biosynthesis; ADP-L-glycero-beta-D-manno-heptose from D-glycero-beta-D-manno-heptose 7-phosphate: step 3/4. Its function is as follows. Catalyzes the phosphorylation of D-glycero-D-manno-heptose 7-phosphate at the C-1 position to selectively form D-glycero-beta-D-manno-heptose-1,7-bisphosphate. Functionally, catalyzes the ADP transfer from ATP to D-glycero-beta-D-manno-heptose 1-phosphate, yielding ADP-D-glycero-beta-D-manno-heptose. The sequence is that of Bifunctional protein HldE from Magnetococcus marinus (strain ATCC BAA-1437 / JCM 17883 / MC-1).